The sequence spans 98 residues: NADH-ubiquinone oxidoreductase chain 4L (98 aa).

The next 3 helical transmembrane spans lie at 1–21, 29–49, and 61–81; these read MPVV…GLLI, SLLC…VTVL, and IILL…LVMV.

This sequence belongs to the complex I subunit 4L family. Core subunit of respiratory chain NADH dehydrogenase (Complex I) which is composed of 45 different subunits.

It localises to the mitochondrion inner membrane. It catalyses the reaction a ubiquinone + NADH + 5 H(+)(in) = a ubiquinol + NAD(+) + 4 H(+)(out). Core subunit of the mitochondrial membrane respiratory chain NADH dehydrogenase (Complex I) which catalyzes electron transfer from NADH through the respiratory chain, using ubiquinone as an electron acceptor. Part of the enzyme membrane arm which is embedded in the lipid bilayer and involved in proton translocation. The sequence is that of NADH-ubiquinone oxidoreductase chain 4L (MT-ND4L) from Ursus maritimus (Polar bear).